Reading from the N-terminus, the 180-residue chain is DNA-directed RNA polymerase subunit omega (180 aa).

The tract at residues 100-180 (ISKSGTPILP…NSDDSETTNS (81 aa)) is disordered. Acidic residues-rich tracts occupy residues 137–151 (EVDVDAELEVGDEET) and 159–180 (AEAETEAETTEVNSDDSETTNS).

Belongs to the RNA polymerase subunit omega family. As to quaternary structure, the RNAP catalytic core consists of 2 alpha, 1 beta, 1 beta' and 1 omega subunit. When a sigma factor is associated with the core the holoenzyme is formed, which can initiate transcription.

The enzyme catalyses RNA(n) + a ribonucleoside 5'-triphosphate = RNA(n+1) + diphosphate. Promotes RNA polymerase assembly. Latches the N- and C-terminal regions of the beta' subunit thereby facilitating its interaction with the beta and alpha subunits. In Pelagibacter ubique (strain HTCC1062), this protein is DNA-directed RNA polymerase subunit omega.